Consider the following 237-residue polypeptide: Phosphoribosylaminoimidazole-succinocarboxamide synthase (237 aa).

Belongs to the SAICAR synthetase family.

It carries out the reaction 5-amino-1-(5-phospho-D-ribosyl)imidazole-4-carboxylate + L-aspartate + ATP = (2S)-2-[5-amino-1-(5-phospho-beta-D-ribosyl)imidazole-4-carboxamido]succinate + ADP + phosphate + 2 H(+). It functions in the pathway purine metabolism; IMP biosynthesis via de novo pathway; 5-amino-1-(5-phospho-D-ribosyl)imidazole-4-carboxamide from 5-amino-1-(5-phospho-D-ribosyl)imidazole-4-carboxylate: step 1/2. This chain is Phosphoribosylaminoimidazole-succinocarboxamide synthase, found in Idiomarina loihiensis (strain ATCC BAA-735 / DSM 15497 / L2-TR).